A 405-amino-acid polypeptide reads, in one-letter code: L-carnitine CoA-transferase (405 aa).

CoA-binding residues include K97 and R104. D169 (nucleophile) is an active-site residue.

Belongs to the CoA-transferase III family. CaiB subfamily. As to quaternary structure, homodimer.

It localises to the cytoplasm. It catalyses the reaction crotonobetainyl-CoA + (R)-carnitine = crotonobetaine + (R)-carnitinyl-CoA. The catalysed reaction is 4-(trimethylamino)butanoyl-CoA + (R)-carnitine = (R)-carnitinyl-CoA + 4-(trimethylamino)butanoate. It functions in the pathway amine and polyamine metabolism; carnitine metabolism. Its function is as follows. Catalyzes the reversible transfer of the CoA moiety from gamma-butyrobetainyl-CoA to L-carnitine to generate L-carnitinyl-CoA and gamma-butyrobetaine. Is also able to catalyze the reversible transfer of the CoA moiety from gamma-butyrobetainyl-CoA or L-carnitinyl-CoA to crotonobetaine to generate crotonobetainyl-CoA. The polypeptide is L-carnitine CoA-transferase (Shigella flexneri serotype 5b (strain 8401)).